The following is a 172-amino-acid chain: RNA silencing suppressor p19 (172 aa).

Residues 1 to 20 (MERAIQGNDAREQANSERWD) show a composition bias toward basic and acidic residues. The interval 1–37 (MERAIQGNDAREQANSERWDGGSGGTTSPFKLPDESP) is disordered.

The protein belongs to the tombusvirus protein p19 family. In terms of assembly, homodimer.

In terms of biological role, viral suppressor of RNA silencing which binds specifically to silencing RNAs (siRNAs). Acts as a molecular caliper to specifically select siRNAs based on the length of the duplex region of the RNA. This is RNA silencing suppressor p19 from Tomato bushy stunt virus (strain Ja6) (TBSV).